We begin with the raw amino-acid sequence, 271 residues long: Small ribosomal subunit protein uS2 (271 aa).

Residues 223–271 (RALAGSEEGEATEEVTPASEAEKQEVLAEAMSEEGDALQESEVVEEEEK) are disordered. Residues 253-271 (MSEEGDALQESEVVEEEEK) are compositionally biased toward acidic residues.

This sequence belongs to the universal ribosomal protein uS2 family.

In Wolinella succinogenes (strain ATCC 29543 / DSM 1740 / CCUG 13145 / JCM 31913 / LMG 7466 / NCTC 11488 / FDC 602W) (Vibrio succinogenes), this protein is Small ribosomal subunit protein uS2.